Reading from the N-terminus, the 828-residue chain is Periplasmic nitrate reductase (828 aa).

Residues 1 to 31 (MKLSRRSFMKANAVAAAAAAAGLSVPGVARA) constitute a signal peptide (tat-type signal). The region spanning 39-95 (IKWDKAPCRFCGTGCGVLVGTQQGRVVACQGDPDAPVNRGLNCIKGYFLPKIMYGKD) is the 4Fe-4S Mo/W bis-MGD-type domain. The [4Fe-4S] cluster site is built by Cys46, Cys49, Cys53, and Cys81. Mo-bis(molybdopterin guanine dinucleotide)-binding positions include Lys83, Gln150, Asn175, Cys179, 212 to 219 (WGSNMAEM), 243 to 247 (STFQH), 262 to 264 (QSD), Met372, Gln376, Asn482, 508 to 509 (SD), Lys531, Asp558, and 718 to 727 (TGRVLEHWHT). Substrate is bound at residue Phe794. Residues Asn802 and Lys819 each coordinate Mo-bis(molybdopterin guanine dinucleotide).

Belongs to the prokaryotic molybdopterin-containing oxidoreductase family. NasA/NapA/NarB subfamily. As to quaternary structure, component of the periplasmic nitrate reductase NapAB complex composed of NapA and NapB. The cofactor is [4Fe-4S] cluster. It depends on Mo-bis(molybdopterin guanine dinucleotide) as a cofactor. Post-translationally, predicted to be exported by the Tat system. The position of the signal peptide cleavage has not been experimentally proven.

The protein resides in the periplasm. It carries out the reaction 2 Fe(II)-[cytochrome] + nitrate + 2 H(+) = 2 Fe(III)-[cytochrome] + nitrite + H2O. Its function is as follows. Catalytic subunit of the periplasmic nitrate reductase complex NapAB. Receives electrons from NapB and catalyzes the reduction of nitrate to nitrite. This is Periplasmic nitrate reductase from Salmonella agona (strain SL483).